A 424-amino-acid chain; its full sequence is GTPase Obg (424 aa).

The Obg domain maps to 1–158; it reads MFIDTAKIFV…RWIKLELKLL (158 aa). The OBG-type G domain occupies 159-331; the sequence is ADVGLIGFPN…LMKEAARLLS (173 aa). Residues 165–172, 190–194, 212–215, 282–285, and 312–314 each bind GTP; these read GFPNVGKS, FTTLK, DIPG, NKSD, and SAA. Residues Ser172 and Thr192 each coordinate Mg(2+). The OCT domain maps to 345 to 424; it reads RFIEEEKRFT…LNDFEFDFLL (80 aa).

The protein belongs to the TRAFAC class OBG-HflX-like GTPase superfamily. OBG GTPase family. As to quaternary structure, monomer. The cofactor is Mg(2+).

Its subcellular location is the cytoplasm. Functionally, an essential GTPase which binds GTP, GDP and possibly (p)ppGpp with moderate affinity, with high nucleotide exchange rates and a fairly low GTP hydrolysis rate. Plays a role in control of the cell cycle, stress response, ribosome biogenesis and in those bacteria that undergo differentiation, in morphogenesis control. In Clostridium botulinum (strain ATCC 19397 / Type A), this protein is GTPase Obg.